We begin with the raw amino-acid sequence, 119 residues long: Basic phospholipase A2 notexin (119 aa).

Intrachain disulfides connect Cys11-Cys71, Cys27-Cys118, Cys29-Cys45, Cys44-Cys99, Cys51-Cys92, Cys60-Cys85, and Cys78-Cys90. Positions 28, 30, and 32 each coordinate Ca(2+). His48 is an active-site residue. Asp49 lines the Ca(2+) pocket. Asp93 is an active-site residue.

The protein belongs to the phospholipase A2 family. Group I subfamily. D49 sub-subfamily. As to quaternary structure, monomer. It depends on Ca(2+) as a cofactor. Expressed by the venom gland.

It localises to the secreted. It catalyses the reaction a 1,2-diacyl-sn-glycero-3-phosphocholine + H2O = a 1-acyl-sn-glycero-3-phosphocholine + a fatty acid + H(+). Functionally, snake venom phospholipase A2 (PLA2) that inhibits neuromuscular transmission by blocking acetylcholine release from the nerve termini. Is directly toxic to skeletal muscle upon local application in vivo (dystrophic effect). Also has direct nephrotoxicity in experimental mice; a single subcutaneous dose (1.38 ug/kg) produces renal tubular and glomerular damage within 24 hours. PLA2 catalyzes the calcium-dependent hydrolysis of the 2-acyl groups in 3-sn-phosphoglycerides. The protein is Basic phospholipase A2 notexin of Notechis scutatus scutatus (Mainland tiger snake).